A 464-amino-acid chain; its full sequence is L-cysteine desulfhydrase-like protein lolT2 (464 aa).

Lys-227 carries the post-translational modification N6-(pyridoxal phosphate)lysine.

Belongs to the class-V pyridoxal-phosphate-dependent aminotransferase family. The cofactor is pyridoxal 5'-phosphate.

The protein operates within alkaloid biosynthesis. L-cysteine desulfhydrase-like protein; part of the gene cluster that mediates the biosynthesis of loline alkaloids, potent insecticidal agents composed of a pyrrolizidine ring system and an uncommon ether bridge linking carbons 2 and 7. Lolines are structurally differentiated by the various modifications of the L-amino group and include norloline, loline, N-methylloline, N-acetylloline, N-acetylnorloline, and N-formylloline. The first committed step is the condensation of O-acetyl-L-homoserine (derived from L-aspartic acid) and L-proline, probably catalyzed by the gamma-type pyridoxal 5'-phosphate(PLP)-dependent enzyme lolC, to give the diamino diacid, NACPP. Ensuing cyclization, decarboxylation, and acetylation steps yield 1-exo-acetamidopyrrolizidine (AcAP). LolO is required for installation of the ether bridge upon the pathway intermediate, 1-exo-acetamidopyrrolizidine (AcAP). In sequential 2-oxoglutarate- and O(2)-consuming steps, lolO removes hydrogens from C2 and C7 of AcAP to form both carbon-oxygen bonds in N-acetylnorloline (NANL), the precursor to all other lolines. The enzymes lolD, lolE, lolF and lolT have also been proposed to be involved in the ether-bridge installation. Further processing of the exocyclic moiety of NANL by fungal N-acetamidase (LolN), methyltransferase (LolM), and cytochrome P450 (LolP) enzymes, with occasional involvement of a plant acetyltransferase, generates the other known lolines. LolN transforms NANL to norlonine which is monomethylated and dimethylated to respectively lonine and N-methyllonine (NML) by lolM. LolP catalyzes hydroxylation of the methyl group in N-methylloline (NML) and further oxygenation to N-formylloline (NFL). A plant acetyltransferase is responsible for the acetylation of loline to form N-acetylloline (NAL). LolA might interact with aspartate kinase to prevent feedback inhibition of its activity by these end products and thereby promote production of L-homoserine from L-aspartate. The protein is L-cysteine desulfhydrase-like protein lolT2 of Epichloe uncinata (Endophyte fungus).